The sequence spans 557 residues: MEPAAEILVDSPDVIFGPEAIEARYEYRTTRVSREGGVLRVRPTATRFTFRTARQVPRLGVMLVGWGGNNGSTLTAAVLANRLRLTWPTRTGRKEANYYGSLTQAGTVNLGLDGDGREVFVPFSALLPMVAPNDLVFDGWDISSLNLAEAMRRAQVLDCGLQEQLWPHMESLRPRPSVYIPEFIAANQTARADNLIPGTRAQQLEQIRKDIRDFRSSAGLDKVIVLWTANTERFCEVVPGRNDTAENLLRTIQLGLEVSPSTLFAVASILEGCAFLNGSPQNTLVPGALELASQRHVFVGGDDFKSGQTKVKSVLVDFLIGSGLKTMSIVSYNHLGNNDGQNLSAPLQFRSKEVTKSSVVDDMVQSNRVLYAPGEEPDHCVVIKYVPYVGDSKRALDEYTSELMLGGTNTLVLHNTCEDSLLAAPIMLDLVLLTELCQRVSFCTDSDPEPQGFHPVLSVLSFLFKAPLVPPGSPVVNALFRQRSCIENIFRACVGLPPQNHMLLEHKMERPFPGIKPEEVKATSPLPCKKESTPATNGCTGDANGHTQAPTPELSTA.

NAD(+)-binding residues include G67, G68, N69, N70, D141, S177, V178, Q188, R191, T228, A229, N230, T231, G278, S279, D303, S306, N337, N338, D339, and K352. S279 carries the phosphoserine modification. S357 bears the Phosphoserine mark. Positions 390, 391, 419, and 420 each coordinate NAD(+). A disordered region spans residues 514–557 (GIKPEEVKATSPLPCKKESTPATNGCTGDANGHTQAPTPELSTA). Position 524 is a phosphoserine (S524). The span at 533 to 557 (TPATNGCTGDANGHTQAPTPELSTA) shows a compositional bias: polar residues.

It belongs to the myo-inositol 1-phosphate synthase family. Homotrimer. It depends on NAD(+) as a cofactor. Phosphorylation at Ser-524 does not appear to affect enzyme activity, and is detected in brain and testis. Expressed in testis, brain and epididymis (at protein level). Moderately expressed in brain, lung, liver, and kidney. Low expression in heart and spleen. Very low expression in skeletal muscle. In terms of tissue distribution, expressed in testis, spleen, heart, brainstem, hippocampus, cerebellum, cortex and amygdala. Absent or very lowly expressed in intestine, lung and muscle. As to expression, expressed in intestine, lung, liver, muscle, testis, spleen, brainstem, hippocampus, cerebellum, cortex and amygdala. Absent or lowly expressed in heart and kidney. Expressed in intestine (at protein level).

It localises to the cytoplasm. It carries out the reaction D-glucose 6-phosphate = 1D-myo-inositol 3-phosphate. It functions in the pathway polyol metabolism; myo-inositol biosynthesis; myo-inositol from D-glucose 6-phosphate: step 1/2. With respect to regulation, inhibited by 2-deoxyglucitol 6-phosphate (dgtolP) and 2-deoxy-D-glucose 6-phosphate. Inhibited by copper, mercury, cadmium, zinc and copper ions. Activated by potassium and ammonium ions. In terms of biological role, key enzyme in myo-inositol biosynthesis pathway that catalyzes the conversion of glucose 6-phosphate to 1-myo-inositol 1-phosphate in a NAD-dependent manner. Rate-limiting enzyme in the synthesis of all inositol-containing compounds. Key enzyme in myo-inositol biosynthesis pathway that catalyzes the conversion of glucose 6-phosphate to 1-myo-inositol 1-phosphate in a NAD-dependent manner. Functionally, competitively inhibits the function of isoform 1, presumably by competing for NAD cofactor. The polypeptide is Inositol-3-phosphate synthase 1 (Isyna1) (Rattus norvegicus (Rat)).